The following is a 383-amino-acid chain: GDSL esterase/lipase At1g28610 (383 aa).

The first 22 residues, 1–22 (MASLDSLVSFFLSTLFVTIVSS), serve as a signal peptide directing secretion. Residue Ser38 is the Nucleophile of the active site. Residues Asn134, Asn184, and Asn315 are each glycosylated (N-linked (GlcNAc...) asparagine). Active-site residues include Asp340 and His343.

This sequence belongs to the 'GDSL' lipolytic enzyme family.

The protein localises to the secreted. The protein is GDSL esterase/lipase At1g28610 of Arabidopsis thaliana (Mouse-ear cress).